Here is a 380-residue protein sequence, read N- to C-terminus: MDWIQTAGAGTQLPENNIKIAVFGIGGAGNNIIDDMLRMHPELQTANVQFFALNTDLQHLKTKRYVQNKAVIQFEESKGLGVGGDPQKGAVLAHHFLEQFHKLSDSFDFCILVAGFGKGTGTGATPVFSKFLSNKGVLNLSIVSYPAMCEGLKAREKAAKGLERLNQATDSFMLFRNDRCTDGIYQLANVAIVKTIKNIIELINLPLQQNIDFEDIRSFFKKPAQRLENEANLFRVTNTFTFSFDAHNTIEHFSHKLKNFEYEGFFDHKVEGAQKVILKVLVNQGLYPLDLTQIQEIIWAKIDNHNLEVQLGVDFTDANPSVQLFFLMEKKQAVSSDFIQKPAFISVKEVNQKPAKPFQVLNDLKELGLKYVKQQTGFNY.

GTP contacts are provided by residues glycine 27–asparagine 31, glycine 119–glycine 121, glutamate 150, and asparagine 189.

The protein belongs to the FtsZ family. As to quaternary structure, homodimer. Polymerizes to form a dynamic ring structure in a strictly GTP-dependent manner. Interacts directly with several other division proteins.

It localises to the cytoplasm. Its function is as follows. Essential cell division protein that forms a contractile ring structure (Z ring) at the future cell division site. The regulation of the ring assembly controls the timing and the location of cell division. One of the functions of the FtsZ ring is to recruit other cell division proteins to the septum to produce a new cell wall between the dividing cells. Binds GTP and shows GTPase activity. This Mycoplasma pneumoniae (strain ATCC 29342 / M129 / Subtype 1) (Mycoplasmoides pneumoniae) protein is Cell division protein FtsZ.